Reading from the N-terminus, the 870-residue chain is Lysosomal cholesterol signaling protein (870 aa).

The Lumenal portion of the chain corresponds to 1–38 (MNSNLPAENLTIAVNMTKTLPTAVTHGFNSTNDPPSMS). The interval 1–370 (MNSNLPAENL…SAWLLTFPTM (370 aa)) is PIN-like transporter. N-linked (GlcNAc...) asparagine glycosylation is found at Asn-9, Asn-15, and Asn-29. The helical transmembrane segment at 39–59 (ITRLFPALLECFGIVLCGYIA) threads the bilayer. The cholesterol site is built by Phe-43 and Tyr-57. The Cytoplasmic portion of the chain corresponds to 60–79 (GRANVITSTQAKGLGNFVSR). Residues 80-100 (FALPALLFKNMVVLNFSNVDW) form a helical membrane-spanning segment. The Lumenal segment spans residues 101–104 (SFLY). Residues 105–125 (SILIAKASVFFIVCVLTLLVA) form a helical membrane-spanning segment. Residues 126–133 (SPDSRFSK) lie on the Cytoplasmic side of the membrane. A discontinuously helical membrane pass occupies residues 134-154 (AGLFPIFATQSNDFALGYPIV). Residues 155–167 (EALYQTTYPEYLQ) are Lumenal-facing. A helical transmembrane segment spans residues 168–188 (YIYLVAPISLMMLNPIGFIFC). Residues 189 to 213 (EIQKWKDTQNASQNKIKIVGLGLLR) lie on the Cytoplasmic side of the membrane. A discontinuously helical membrane pass occupies residues 214-234 (VLQNPIVFMVFIGIAFNFILD). At 235–243 (RKVPVYVEN) the chain is on the lumenal side. Residues 244 to 264 (FLDGLGNSFSGSALFYLGLTM) form a discontinuously helical membrane-spanning segment. Topologically, residues 265 to 273 (VGKIKRLKK) are cytoplasmic. Gly-266, Lys-267, and Ile-268 together coordinate cholesterol. The chain crosses the membrane as a helical span at residues 274–294 (SAFVVLILLITAKLLVLPLLC). At 295 to 315 (REMVELLDKGDSVVNHTSLSN) the chain is on the lumenal side. Residue Asn-309 is glycosylated (N-linked (GlcNAc...) asparagine). A discontinuously helical transmembrane segment spans residues 316 to 336 (YAFLYGVFPVAPGVAIFATQF). Over 337–346 (NMEVEIITSG) the chain is Cytoplasmic. The chain crosses the membrane as a helical span at residues 347–367 (MVISTFVSAPIMYVSAWLLTF). The Lumenal portion of the chain corresponds to 368-381 (PTMDPKPLAYAIQN). The interval 380 to 717 (QNVSFDISIV…FGIFGLDKHL (338 aa)) is GPCR. A glycan (N-linked (GlcNAc...) asparagine) is linked at Asn-381. A helical transmembrane segment spans residues 382–402 (VSFDISIVSLISLIWSLAILL). At 403 to 414 (LSKKYKQLPHML) the chain is on the cytoplasmic side. Residues 415–435 (TTNLLIAQSIVCAGMMIWNFV) traverse the membrane as a helical segment. The Lumenal portion of the chain corresponds to 436–438 (KEK). The helical transmembrane segment at 439 to 459 (NFVGQILVFVLLYSSLYSTYL) threads the bilayer. The Cytoplasmic segment spans residues 460–480 (WTGLLAISLFLLKKRERVQIP). Residues 481–501 (VGIIIISGWGIPALLVGVLLI) traverse the membrane as a helical segment. The Lumenal portion of the chain corresponds to 502-520 (TGKHNGDSIDSAFFYGKEQ). Residues 521-541 (MITTAVTLFCSILIAGISLMC) traverse the membrane as a helical segment. Topologically, residues 542-660 (MNQTAQAGSY…GDQQLTRHVL (119 aa)) are cytoplasmic. Arg-657 provides a ligand contact to cholesterol. A helical transmembrane segment spans residues 661–681 (LCLLLIIGLFANLSSCLWWLF). Over 682-691 (NQEPGRLYVE) the chain is Lumenal. Residues 692–712 (LQFFCAVFNFGQGFISFGIFG) form a helical membrane-spanning segment. Over 713–870 (LDKHLIILPF…SSPPSHSPKT (158 aa)) the chain is Cytoplasmic. Residues 757 to 835 (YHRDLCIRNI…DEYLFYRFLQ (79 aa)) enclose the DEP domain.

Homodimer; via the transporter region and DEP domain. Interacts with the GATOR1 complex and prevents interaction between GATOR1 and KICSTOR; this interaction is disrupted upon cholesterol starvation.

The protein localises to the lysosome membrane. Its function is as follows. Cholesterol-binding protein that acts as a regulator of mTORC1 signaling pathway. Acts as a sensor of cholesterol to signal cholesterol sufficiency to mTORC1: in presence of cholesterol, binds cholesterol, leading to disruption of the interaction between the GATOR1 and KICSTOR complexes and promotion of mTORC1 signaling. Upon cholesterol starvation, GPR155/LYCHOS is unable to perturb the association between GATOR1 and KICSTOR, leading to mTORC1 signaling inhibition. Binds indole-3-acetic acid and may play a role in tryptophan metabolism. In Homo sapiens (Human), this protein is Lysosomal cholesterol signaling protein.